The chain runs to 876 residues: Alanine--tRNA ligase (876 aa).

H568, H572, C670, and H674 together coordinate Zn(2+).

Belongs to the class-II aminoacyl-tRNA synthetase family. Zn(2+) is required as a cofactor.

The protein resides in the cytoplasm. It carries out the reaction tRNA(Ala) + L-alanine + ATP = L-alanyl-tRNA(Ala) + AMP + diphosphate. Catalyzes the attachment of alanine to tRNA(Ala) in a two-step reaction: alanine is first activated by ATP to form Ala-AMP and then transferred to the acceptor end of tRNA(Ala). Also edits incorrectly charged Ser-tRNA(Ala) and Gly-tRNA(Ala) via its editing domain. This Geotalea uraniireducens (strain Rf4) (Geobacter uraniireducens) protein is Alanine--tRNA ligase.